Here is a 423-residue protein sequence, read N- to C-terminus: UDP-N-acetylglucosamine 1-carboxyvinyltransferase 1 (423 aa).

Position 24-25 (24-25 (KN)) interacts with phosphoenolpyruvate. Arg-94 contacts UDP-N-acetyl-alpha-D-glucosamine. Cys-118 acts as the Proton donor in catalysis. 2-(S-cysteinyl)pyruvic acid O-phosphothioketal is present on Cys-118. Residues 123–127 (RPIDQ), Asp-309, and Ile-331 contribute to the UDP-N-acetyl-alpha-D-glucosamine site.

The protein belongs to the EPSP synthase family. MurA subfamily.

The protein resides in the cytoplasm. The enzyme catalyses phosphoenolpyruvate + UDP-N-acetyl-alpha-D-glucosamine = UDP-N-acetyl-3-O-(1-carboxyvinyl)-alpha-D-glucosamine + phosphate. The protein operates within cell wall biogenesis; peptidoglycan biosynthesis. In terms of biological role, cell wall formation. Adds enolpyruvyl to UDP-N-acetylglucosamine. In Staphylococcus haemolyticus (strain JCSC1435), this protein is UDP-N-acetylglucosamine 1-carboxyvinyltransferase 1.